The sequence spans 230 residues: Demethylmenaquinone methyltransferase (230 aa).

S-adenosyl-L-methionine contacts are provided by residues T62, D80, 100-101, and S117; that span reads DG.

This sequence belongs to the class I-like SAM-binding methyltransferase superfamily. MenG/UbiE family.

The enzyme catalyses a 2-demethylmenaquinol + S-adenosyl-L-methionine = a menaquinol + S-adenosyl-L-homocysteine + H(+). It participates in quinol/quinone metabolism; menaquinone biosynthesis; menaquinol from 1,4-dihydroxy-2-naphthoate: step 2/2. Its function is as follows. Methyltransferase required for the conversion of demethylmenaquinol (DMKH2) to menaquinol (MKH2). In Corynebacterium efficiens (strain DSM 44549 / YS-314 / AJ 12310 / JCM 11189 / NBRC 100395), this protein is Demethylmenaquinone methyltransferase.